The following is a 149-amino-acid chain: Nucleoside diphosphate kinase (149 aa).

6 residues coordinate ATP: K9, F57, R85, T91, R102, and N112. H115 (pros-phosphohistidine intermediate) is an active-site residue.

This sequence belongs to the NDK family. In terms of assembly, homotetramer. Requires Mg(2+) as cofactor.

It is found in the cytoplasm. The enzyme catalyses a 2'-deoxyribonucleoside 5'-diphosphate + ATP = a 2'-deoxyribonucleoside 5'-triphosphate + ADP. The catalysed reaction is a ribonucleoside 5'-diphosphate + ATP = a ribonucleoside 5'-triphosphate + ADP. Major role in the synthesis of nucleoside triphosphates other than ATP. The ATP gamma phosphate is transferred to the NDP beta phosphate via a ping-pong mechanism, using a phosphorylated active-site intermediate. This Desulfitobacterium hafniense (strain DSM 10664 / DCB-2) protein is Nucleoside diphosphate kinase.